Here is a 264-residue protein sequence, read N- to C-terminus: Protein GrpE (264 aa).

A compositionally biased stretch (basic and acidic residues) spans K36–S49. The segment at K36–S59 is disordered. Over residues E50–S59 the composition is skewed to low complexity.

This sequence belongs to the GrpE family. In terms of assembly, homodimer.

The protein resides in the cytoplasm. Its function is as follows. Participates actively in the response to hyperosmotic and heat shock by preventing the aggregation of stress-denatured proteins, in association with DnaK and GrpE. It is the nucleotide exchange factor for DnaK and may function as a thermosensor. Unfolded proteins bind initially to DnaJ; upon interaction with the DnaJ-bound protein, DnaK hydrolyzes its bound ATP, resulting in the formation of a stable complex. GrpE releases ADP from DnaK; ATP binding to DnaK triggers the release of the substrate protein, thus completing the reaction cycle. Several rounds of ATP-dependent interactions between DnaJ, DnaK and GrpE are required for fully efficient folding. The protein is Protein GrpE of Peanut witches'-broom phytoplasma.